The sequence spans 1160 residues: Nonribosomal peptide synthetase fmqC (1160 aa).

The interval 132–520 (TYRELNDRSS…LGEVEHALQQ (389 aa)) is adenylation. A Carrier domain is found at 642-719 (QPVTQLEESL…EMAGMLDGVT (78 aa)). O-(pantetheine 4'-phosphoryl)serine is present on S679. The interval 749-1025 (CTLEDLQEGF…CAAAETPMRI (277 aa)) is condensation.

The protein belongs to the NRP synthetase family. As to quaternary structure, interacts with the mitogen-activated protein kinase mpkA. Phosphorylated by mpkA during conidiogenesis.

The protein resides in the cytoplasm. It participates in alkaloid biosynthesis. Its function is as follows. Nonribosomal peptide synthetase; part of the gene cluster that mediates the biosynthesis of the antitumor fumiquinazolines that confer a dual-usage capability to defend against phagocytes in the environment and animal hosts. The simplest member is fumiquinazoline F (FQF) with a 6-6-6 tricyclic core derived from anthranilic acid (Ant), tryptophan (Trp), and alanine (Ala). The trimodular NRPS fmqA is responsible for FQF formation. Modules 1, 2 and 3 of fmqA are predicted to activate and load Ant, Trp and Ala, respectively, providing for the assembly of an Ant-Trp-Ala-S-enzyme intermediate that would undergo double cyclization for chain release and generation of the tricyclic 6-6-6 product fumiquinazoline F. The presence of an E domain predicted for module 2 of fmqA is consistent with epimerization of L-Trp to D-Trp during assembly to generate the R-stereocenter at C14 of FQF. The FAD-dependent monooxygenase fmqB and the monomodular NRPS fmqC then maturate FQF to FQA. FmqB oxidizes the 2',3'-double bond of the indole side chain of FQF, and fmqC activates L-Ala as the adenylate, installs it as the pantetheinyl thioester on its carrier protein domain, and acylates the oxidized indole for subsequent intramolecular cyclization to create the 6-5-5-imidazolindolone of FQA. The FAD-linked oxidoreductase fmqD introduces a third layer of scaffold complexity by converting FQA to the spirohemiaminal FQC, presumably by catalyzing the formation of a transient imine within the pyrazinone ring. FQC subsequently converts nonenzymatically to the known cyclic aminal FQD. This is Nonribosomal peptide synthetase fmqC from Aspergillus fumigatus (strain ATCC MYA-4609 / CBS 101355 / FGSC A1100 / Af293) (Neosartorya fumigata).